A 438-amino-acid chain; its full sequence is sn-glycerol-3-phosphate-binding periplasmic protein UgpB (438 aa).

The first 23 residues, 1–23, serve as a signal peptide directing secretion; that stretch reads MKPLHYTASALALGLALMGNAQA. The sn-glycerol 3-phosphate site is built by Tyr-65, Glu-89, Ser-144, Ser-270, Gly-307, Tyr-346, and Arg-397.

It belongs to the bacterial solute-binding protein 1 family. As to quaternary structure, the complex is composed of two ATP-binding proteins (UgpC), two transmembrane proteins (UgpA and UgpE) and a solute-binding protein (UgpB).

It localises to the periplasm. Part of the ABC transporter complex UgpBAEC involved in sn-glycerol-3-phosphate (G3P) import. Binds G3P. In Shigella dysenteriae serotype 1 (strain Sd197), this protein is sn-glycerol-3-phosphate-binding periplasmic protein UgpB (ugpB).